The following is a 435-amino-acid chain: Trigger factor (435 aa).

The 81-residue stretch at 183–263 folds into the PPIase FKBP-type domain; it reads GDFINVDVTI…VKTIWQGNMP (81 aa).

The protein belongs to the FKBP-type PPIase family. Tig subfamily.

It localises to the cytoplasm. The catalysed reaction is [protein]-peptidylproline (omega=180) = [protein]-peptidylproline (omega=0). Functionally, involved in protein export. Acts as a chaperone by maintaining the newly synthesized protein in an open conformation. Functions as a peptidyl-prolyl cis-trans isomerase. The protein is Trigger factor of Protochlamydia amoebophila (strain UWE25).